The sequence spans 328 residues: Methionyl-tRNA formyltransferase (328 aa).

Ser121–Pro124 contributes to the (6S)-5,6,7,8-tetrahydrofolate binding site.

Belongs to the Fmt family.

It catalyses the reaction L-methionyl-tRNA(fMet) + (6R)-10-formyltetrahydrofolate = N-formyl-L-methionyl-tRNA(fMet) + (6S)-5,6,7,8-tetrahydrofolate + H(+). Attaches a formyl group to the free amino group of methionyl-tRNA(fMet). The formyl group appears to play a dual role in the initiator identity of N-formylmethionyl-tRNA by promoting its recognition by IF2 and preventing the misappropriation of this tRNA by the elongation apparatus. The chain is Methionyl-tRNA formyltransferase from Paraburkholderia phytofirmans (strain DSM 17436 / LMG 22146 / PsJN) (Burkholderia phytofirmans).